The following is a 218-amino-acid chain: ETS domain-containing protein ets-7 (218 aa).

Positions 12–93 (QRLLNFLRGL…KGKDSRYCFL (82 aa)) form a DNA-binding region, ETS. Positions 131–161 (TSNFSLQSSPSSSSNSSSARTMSATSSPTSS) are enriched in low complexity. The tract at residues 131-162 (TSNFSLQSSPSSSSNSSSARTMSATSSPTSSL) is disordered.

This sequence belongs to the ETS family.

The protein resides in the nucleus. In terms of biological role, probable transcription factor. Involved in responses to oxidative stress. This Caenorhabditis elegans protein is ETS domain-containing protein ets-7.